Reading from the N-terminus, the 146-residue chain is Mediator of RNA polymerase II transcription subunit 10 (146 aa).

It belongs to the Mediator complex subunit 10 family. As to quaternary structure, component of the Mediator complex.

Its subcellular location is the nucleus. In terms of biological role, component of the Mediator complex, a coactivator involved in the regulated transcription of nearly all RNA polymerase II-dependent genes. Mediator functions as a bridge to convey information from gene-specific regulatory proteins to the basal RNA polymerase II transcription machinery. Mediator is recruited to promoters by direct interactions with regulatory proteins and serves as a scaffold for the assembly of a functional preinitiation complex with RNA polymerase II and the general transcription factors. This is Mediator of RNA polymerase II transcription subunit 10 (NUT2) from Scheffersomyces stipitis (strain ATCC 58785 / CBS 6054 / NBRC 10063 / NRRL Y-11545) (Yeast).